We begin with the raw amino-acid sequence, 470 residues long: UDP-N-acetylmuramate--L-alanine ligase (470 aa).

118–124 (GTHGKTT) lines the ATP pocket.

The protein belongs to the MurCDEF family.

Its subcellular location is the cytoplasm. The enzyme catalyses UDP-N-acetyl-alpha-D-muramate + L-alanine + ATP = UDP-N-acetyl-alpha-D-muramoyl-L-alanine + ADP + phosphate + H(+). It participates in cell wall biogenesis; peptidoglycan biosynthesis. Cell wall formation. This chain is UDP-N-acetylmuramate--L-alanine ligase, found in Cereibacter sphaeroides (strain ATCC 17025 / ATH 2.4.3) (Rhodobacter sphaeroides).